The chain runs to 95 residues: UPF0473 protein ABC1595 (95 aa).

This sequence belongs to the UPF0473 family.

This chain is UPF0473 protein ABC1595, found in Shouchella clausii (strain KSM-K16) (Alkalihalobacillus clausii).